The primary structure comprises 491 residues: Ketol-acid reductoisomerase (NADP(+)) (491 aa).

In terms of domain architecture, KARI N-terminal Rossmann spans 15-208 (AQLGKCRFMG…GGHRAGVLES (194 aa)). NADP(+)-binding positions include 45-48 (CGAQ), arginine 68, arginine 76, serine 78, and 108-110 (DKQ). The active site involves histidine 132. Glycine 158 serves as a coordination point for NADP(+). 2 KARI C-terminal knotted domains span residues 209–344 (SFVA…TAPQ) and 345–484 (YEGK…MTDM). 4 residues coordinate Mg(2+): aspartate 217, glutamate 221, glutamate 389, and glutamate 393. Position 414 (serine 414) interacts with substrate.

It belongs to the ketol-acid reductoisomerase family. Mg(2+) serves as cofactor.

The enzyme catalyses (2R)-2,3-dihydroxy-3-methylbutanoate + NADP(+) = (2S)-2-acetolactate + NADPH + H(+). It catalyses the reaction (2R,3R)-2,3-dihydroxy-3-methylpentanoate + NADP(+) = (S)-2-ethyl-2-hydroxy-3-oxobutanoate + NADPH + H(+). The protein operates within amino-acid biosynthesis; L-isoleucine biosynthesis; L-isoleucine from 2-oxobutanoate: step 2/4. Its pathway is amino-acid biosynthesis; L-valine biosynthesis; L-valine from pyruvate: step 2/4. In terms of biological role, involved in the biosynthesis of branched-chain amino acids (BCAA). Catalyzes an alkyl-migration followed by a ketol-acid reduction of (S)-2-acetolactate (S2AL) to yield (R)-2,3-dihydroxy-isovalerate. In the isomerase reaction, S2AL is rearranged via a Mg-dependent methyl migration to produce 3-hydroxy-3-methyl-2-ketobutyrate (HMKB). In the reductase reaction, this 2-ketoacid undergoes a metal-dependent reduction by NADPH to yield (R)-2,3-dihydroxy-isovalerate. In Klebsiella pneumoniae (strain 342), this protein is Ketol-acid reductoisomerase (NADP(+)).